A 235-amino-acid chain; its full sequence is 2-C-methyl-D-erythritol 4-phosphate cytidylyltransferase (235 aa).

This sequence belongs to the IspD/TarI cytidylyltransferase family. IspD subfamily.

It catalyses the reaction 2-C-methyl-D-erythritol 4-phosphate + CTP + H(+) = 4-CDP-2-C-methyl-D-erythritol + diphosphate. Its pathway is isoprenoid biosynthesis; isopentenyl diphosphate biosynthesis via DXP pathway; isopentenyl diphosphate from 1-deoxy-D-xylulose 5-phosphate: step 2/6. Its function is as follows. Catalyzes the formation of 4-diphosphocytidyl-2-C-methyl-D-erythritol from CTP and 2-C-methyl-D-erythritol 4-phosphate (MEP). This Pseudomonas putida (strain GB-1) protein is 2-C-methyl-D-erythritol 4-phosphate cytidylyltransferase.